Here is a 708-residue protein sequence, read N- to C-terminus: Polyribonucleotide nucleotidyltransferase (708 aa).

2 residues coordinate Mg(2+): aspartate 488 and aspartate 494. One can recognise a KH domain in the interval 555-615; that stretch reads PIIKVTKVDP…ENVDKAIELI (61 aa). In terms of domain architecture, S1 motif spans 625–692; the sequence is GEVLEGKVTR…DLGRLQFKRV (68 aa).

Belongs to the polyribonucleotide nucleotidyltransferase family. The cofactor is Mg(2+).

The protein resides in the cytoplasm. It catalyses the reaction RNA(n+1) + phosphate = RNA(n) + a ribonucleoside 5'-diphosphate. Functionally, involved in mRNA degradation. Catalyzes the phosphorolysis of single-stranded polyribonucleotides processively in the 3'- to 5'-direction. The protein is Polyribonucleotide nucleotidyltransferase of Thermotoga petrophila (strain ATCC BAA-488 / DSM 13995 / JCM 10881 / RKU-1).